We begin with the raw amino-acid sequence, 505 residues long: uncharacterized protein (505 aa).

The disordered stretch occupies residues 461-480 (RTDVHPGNSDDEGAYSSADS).

This sequence to M.jannaschii MJ0787.

This is an uncharacterized protein from Methanothermobacter thermautotrophicus (strain ATCC 29096 / DSM 1053 / JCM 10044 / NBRC 100330 / Delta H) (Methanobacterium thermoautotrophicum).